A 648-amino-acid polypeptide reads, in one-letter code: MSSTVNNGATGMPAPPDAANGFPQPGASSGSWPRAEEELRAAEPGLVKRAHREILDHERKRRVELKCMELQEMMEEQGYSEEEIRQKVGTFRQMLMEKEGVLTREDRPGAHIVAETPRRMEGLEPGLEYPPFDEDDGPVDCDCPVSCYRGHRGYRTKHWSSSSASPPPKKKKKKKGSHRRSRKKRRLESECSCGSASPLRKKKKNVKKHRRDRSDSGSRRKRRYRSRSLKSKRKEKNKERKRPHTESPGRRFHHHSSASSHSPSMSSHYSDSGSPSRLSPKHRDDGRKTGSQRSSGSRSPSPSGGSGWGSPQQNGGSRQRSGAHGGRPGSAHSPPDKPSSPRACDKAAAAPTPPARGKDSQSPRSAPSSQGRGGRAAGGTARRRRRRRRRRRSRSSANAPRRRGRRRTKPAPPRGSSRSLSGAHSSSDSGGGAPGPGPEPCSERGHGGHGKRAKERPPRARPASTSPSPGTRGRRGGPEGNSSSRSPGPHQGSWSSSRSPSKSHSRSPDKRTRSPSLSPSPKKPLGRDKDSEGRARHAEAEAARTRRRSRSYSPIRKRRRDSPSFMEPRRITSARKRPIPYYRPSPSSSSSCLSTDYSSRSHSRSPSPGHSHGSYSSRSHGTRSRSCSASRSRSPSYHSRSSSESGGF.

Residues 1–44 form a disordered region; the sequence is MSSTVNNGATGMPAPPDAANGFPQPGASSGSWPRAEEELRAAEP. The CWF21 domain maps to 55 to 98; sequence LDHERKRRVELKCMELQEMMEEQGYSEEEIRQKVGTFRQMLMEK. Basic and acidic residues predominate over residues 99-109; sequence EGVLTREDRPG. Disordered stretches follow at residues 99–139 and 154–648; these read EGVL…DGPV and YRTK…SGGF. Composition is skewed to basic residues over residues 168 to 186, 199 to 211, and 219 to 243; these read PKKK…KKRR, LRKK…KHRR, and RRKR…RKRP. 2 stretches are compositionally biased toward low complexity: residues 257–276 and 289–317; these read SASS…GSPS and TGSQ…NGGS. A compositionally biased stretch (basic residues) spans 381–409; the sequence is ARRRRRRRRRRRSRSSANAPRRRGRRRTK. 3 stretches are compositionally biased toward low complexity: residues 414–428, 461–471, and 493–502; these read RGSS…SSSD, RPASTSPSPGT, and SWSSSRSPSK. Positions 525 to 544 are enriched in basic and acidic residues; that stretch reads LGRDKDSEGRARHAEAEAAR. A compositionally biased stretch (basic residues) spans 545 to 560; the sequence is TRRRSRSYSPIRKRRR. Over residues 579–648 the composition is skewed to low complexity; the sequence is IPYYRPSPSS…SRSSSESGGF (70 aa).

The protein belongs to the CWC21 family.

May play a role in regulating breast cancer cell invasiveness. May be involved in RYBP-mediated breast cancer progression. This is Serine/arginine repetitive matrix protein 3 (Srrm3) from Mus musculus (Mouse).